A 1042-amino-acid chain; its full sequence is Atrial natriuretic peptide-converting enzyme (1042 aa).

Residues 1–25 (MKQSPALAPEERCRRAGSPKPVLRA) are disordered. At 1–45 (MKQSPALAPEERCRRAGSPKPVLRADDNNMGNGCSQKLATANLLR) the chain is on the cytoplasmic side. The DDNN motif signature appears at 26-29 (DDNN). A helical; Signal-anchor for type II membrane protein transmembrane segment spans residues 46–66 (FLLLVLIPCICALVLLLVILL). At 67–1042 (SYVGTLQKVY…QIYIQTFLLN (976 aa)) the chain is on the extracellular side. Residues N80, N104, N135, and N141 are each glycosylated (N-linked (GlcNAc...) asparagine). Residues 134-259 (RNTSACMNIT…SNVSRICFSP (126 aa)) enclose the FZ 1 domain. 8 cysteine pairs are disulfide-bonded: C139–C199, C147–C192, C183–C223, C212–C256, C216–C240, C269–C282, C277–C295, and C289–C304. N-linked (GlcNAc...) asparagine glycans are attached at residues N231, N245, and N251. LDL-receptor class A domains lie at 268–304 (LCGR…EAHC), 305–340 (NCSE…EQNC), 341–377 (DCNP…EVNC), and 378–415 (SCHS…ENCS). N305 carries an N-linked (GlcNAc...) asparagine glycan. 9 disulfide bridges follow: C306–C318, C313–C331, C325–C340, C342–C355, C350–C368, C362–C377, C379–C392, C387–C405, and C399–C414. A glycan (N-linked (GlcNAc...) asparagine) is linked at N320. An N-linked (GlcNAc...) asparagine glycan is attached at N376. N413, N446, N451, and N469 each carry an N-linked (GlcNAc...) asparagine glycan. The FZ 2 domain maps to 450 to 573 (NNCSQCEPIT…NSDNQTCLMP (124 aa)). 14 disulfides stabilise this stretch: C455–C518, C463–C511, C502–C540, C529–C570, C533–C557, C580–C592, C587–C605, C599–C614, C616–C630, C624–C643, C637–C652, C655–C667, C662–C680, and C674–C689. The N-linked (GlcNAc...) asparagine glycan is linked to N567. 3 consecutive LDL-receptor class A domains span residues 579–614 (ECSP…EENC), 615–653 (GCKE…KNCS), and 654–689 (FCQD…EWDC). The N-linked (GlcNAc...) asparagine glycan is linked to N651. In terms of domain architecture, SRCR spans 690-801 (VTLSINVNSS…RRPAARMNKR (112 aa)). 2 N-linked (GlcNAc...) asparagine glycosylation sites follow: N697 and N761. Cystine bridges form between C790/C912, C828/C844, C926/C991, C955/C970, and C981/C1010. One can recognise a Peptidase S1 domain in the interval 802–1035 (ILGGRTSRPG…FVEWIKRQIY (234 aa)). Active-site charge relay system residues include H843 and D892. The Charge relay system role is filled by S985. An N-linked (GlcNAc...) asparagine glycan is attached at N1022.

This sequence belongs to the peptidase S1 family. N-glycosylated; required for processing and activation. Post-translationally, activated through proteolytic processing by a trypsin-like protease; cleaved into a N-terminal propeptide and an activated corin protease fragment. Different soluble forms are produced by cleavage and autocatalytic cleavage: Atrial natriuretic peptide-converting enzyme, 180 kDa soluble fragment is produced by cleavage by ADAM10, while 160 kDa and 100 kDa soluble fragments are produced by autocatalytic cleavage. Cleavage by ADAM10 to produce soluble 180 kDa soluble fragment takes place after the transmembrane region and before FZ 1. In terms of processing, a disulfide bond links the activated corin protease fragment and the N-terminal propeptide. The disulfide bond also links the activated corin protease fragment with soluble fragments (100 kDa, 160 kDa and 180 kDa fragments). Highly expressed in heart. Expressed in heart myocytes. Also expressed in pregnant uterus. Detected in blood, in plasma as well as in serum (at protein level).

The protein localises to the cell membrane. The protein resides in the secreted. Its activity is regulated as follows. Inhibited in a dose-dependent manner by non-specific trypsin-like serine protease inhibitors including benzamidine. Functionally, serine-type endopeptidase involved in atrial natriuretic peptide (NPPA) and brain natriuretic peptide (NPPB) processing. Converts through proteolytic cleavage the non-functional propeptides NPPA and NPPB into their active hormones, ANP and BNP(1-32) respectively, thereby regulating blood pressure in the heart and promoting natriuresis, diuresis and vasodilation. Proteolytic cleavage of pro-NPPA also plays a role in female pregnancy by promoting trophoblast invasion and spiral artery remodeling in uterus. Also acts as a regulator of sodium reabsorption in kidney. Its function is as follows. Has weaker endopeptidase activity compared to isoform 1. The chain is Atrial natriuretic peptide-converting enzyme (CORIN) from Homo sapiens (Human).